A 638-amino-acid chain; its full sequence is Gamma-aminobutyric acid receptor subunit theta (638 aa).

A signal peptide spans 1–21; that stretch reads MGIRGMLRAAALLLLIRTWLA. Topologically, residues 22–267 are extracellular; that stretch reads ESNGPSPTPK…FQVQREVRSY (246 aa). Asn-127 is a glycosylation site (N-linked (GlcNAc...) asparagine). A disulfide bridge connects residues Cys-183 and Cys-197. The chain crosses the membrane as a helical span at residues 268-288; it reads LVQVYWPTVLTTILSWISFWM. Residues 289-296 are Cytoplasmic-facing; that stretch reads NYDSSAAR. Residues 297-314 form a helical membrane-spanning segment; that stretch reads VTIGLTSILVLTTIDSHM. Residues 315–325 lie on the Extracellular side of the membrane; the sequence is RDKLPHISCIK. The chain crosses the membrane as a helical span at residues 326-346; that stretch reads AIDIYILVCLFFVFLSLLEYV. Topologically, residues 347 to 617 are cytoplasmic; the sequence is YINYLFFSQV…NRVPKVDRWS (271 aa). Residues 491 to 515 form a disordered region; it reads ACDDEDSEESLSSEESHGHGSSHTG. Over residues 492-502 the composition is skewed to acidic residues; that stretch reads CDDEDSEESLS. Residues 618–638 form a helical membrane-spanning segment; that stretch reads RFLFPLSFGLFNVVYWLYHVY.

Belongs to the ligand-gated ion channel (TC 1.A.9) family. Gamma-aminobutyric acid receptor (TC 1.A.9.5) subfamily. GABRQ sub-subfamily. In terms of assembly, heteropentamer, formed by a combination of alpha (GABRA1-6), beta (GABRB1-3), gamma (GABRG1-3), delta (GABRD), epsilon (GABRE), rho (GABRR1-3), pi (GABRP) and theta (GABRQ) chains, each subunit exhibiting distinct physiological and pharmacological properties. Expressed in brain, lung, and spleen.

It localises to the postsynaptic cell membrane. The protein localises to the cell membrane. It carries out the reaction chloride(in) = chloride(out). Potentiated by etomidate, propofol, pregnanolone and pentobarbital. Its function is as follows. Theta subunit of the heteropentameric ligand-gated chloride channel gated by gamma-aminobutyric acid (GABA), a major inhibitory neurotransmitter in the brain. GABA-gated chloride channels, also named GABA(A) receptors (GABAAR), consist of five subunits arranged around a central pore and contain GABA active binding site(s) located at the alpha and beta subunit interfaces. When activated by GABA, GABAARs selectively allow the flow of chloride anions across the cell membrane down their electrochemical gradient. In Mus musculus (Mouse), this protein is Gamma-aminobutyric acid receptor subunit theta.